The chain runs to 597 residues: (E)-sabinene hydrate synthase, chloroplastic (597 aa).

The N-terminal 47 residues, 1-47 (MSTISINHVGILRNPLQCKNKRTSINKPWSLSLPRSSPASRLVKPCR), are a transit peptide targeting the chloroplast. Mn(2+) contacts are provided by aspartate 353 and aspartate 357. The DDXXD motif signature appears at 353-357 (DDVYD). Homodimerization regions lie at residues 359 to 365 (YGTLDEL) and 431 to 468 (EAGW…VSLP). 2 residues coordinate Mn(2+): aspartate 495 and glutamate 503.

Belongs to the terpene synthase family. In terms of assembly, homodimer. Mn(2+) is required as a cofactor. The cofactor is Mg(2+).

The protein localises to the plastid. It localises to the chloroplast. The enzyme catalyses (2E)-geranyl diphosphate + H2O = sabinene hydrate + diphosphate. It participates in secondary metabolite biosynthesis; terpenoid biosynthesis. Its function is as follows. Involved in the biosynthesis of phenolic monoterpenes natural products. Monoterpene synthase which catalyzes the conversion of geranyl diphosphate (GPP) to sabinene hydrate, specifically (E)-sabinene hydrate, and the formation of minor amounts and traces of several other monoterpenes (e.g. mainly alpha-pinene, limonene and alpha-terpineol). The protein is (E)-sabinene hydrate synthase, chloroplastic of Thymus vulgaris (Thyme).